Reading from the N-terminus, the 271-residue chain is 2,3,4,5-tetrahydropyridine-2,6-dicarboxylate N-succinyltransferase (271 aa).

Belongs to the transferase hexapeptide repeat family.

It is found in the cytoplasm. The catalysed reaction is (S)-2,3,4,5-tetrahydrodipicolinate + succinyl-CoA + H2O = (S)-2-succinylamino-6-oxoheptanedioate + CoA. It participates in amino-acid biosynthesis; L-lysine biosynthesis via DAP pathway; LL-2,6-diaminopimelate from (S)-tetrahydrodipicolinate (succinylase route): step 1/3. The chain is 2,3,4,5-tetrahydropyridine-2,6-dicarboxylate N-succinyltransferase from Coxiella burnetii (strain CbuG_Q212) (Coxiella burnetii (strain Q212)).